We begin with the raw amino-acid sequence, 2789 residues long: Testis-expressed protein 15 (2789 aa).

Over residues 34-46 (HNNTGSSTVTTSK) the composition is skewed to polar residues. Disordered regions lie at residues 34–99 (HNNT…SSEV), 169–191 (ENQN…AYTK), 1063–1166 (FSSK…EHQP), 2303–2331 (KNIS…DTTV), and 2351–2379 (KATF…DSLK). Basic and acidic residues predominate over residues 47-59 (SIKDPRLMRREES). Positions 80-98 (DNVNSEIKSTPSNSASSSE) are enriched in polar residues. A compositionally biased stretch (basic and acidic residues) spans 170-179 (NQNHSEEKAQ). Over residues 1063–1077 (FSSKRKYDKRRKKRA) the composition is skewed to basic residues. 2 stretches are compositionally biased toward low complexity: residues 1106–1116 (RKSMASSVSKS) and 1134–1160 (SQLP…NPSL).

Belongs to the TEX15 family. In terms of assembly, interacts with PIWIL4 and PIWIL2. Expressed in testis, predominantly in germ cells. Low expression, if any, in ovary. Also expressed in several cancers.

Its subcellular location is the cytoplasm. The protein localises to the nucleus. Required during spermatogenesis for normal chromosome synapsis and meiotic recombination in germ cells. Necessary for formation of DMC1 and RAD51 foci on meiotic chromosomes, suggesting a specific role in DNA double-stranded break repair. Essential executor of PIWIL4-piRNA pathway directed transposon DNA methylation and silencing in the male embryonic germ cells. PIWIL4-piRNA binds to nascent transposon transcripts and interacts with TEX15, which may in turn recruit the epigenetic silencing machinery to the transposon loci. Not required for piRNA biosynthesis. The polypeptide is Testis-expressed protein 15 (TEX15) (Homo sapiens (Human)).